The primary structure comprises 430 residues: UDP-N-acetylmuramoylalanine--D-glutamate ligase (430 aa).

109 to 115 (GTDGKST) contributes to the ATP binding site.

It belongs to the MurCDEF family.

The protein localises to the cytoplasm. It catalyses the reaction UDP-N-acetyl-alpha-D-muramoyl-L-alanine + D-glutamate + ATP = UDP-N-acetyl-alpha-D-muramoyl-L-alanyl-D-glutamate + ADP + phosphate + H(+). The protein operates within cell wall biogenesis; peptidoglycan biosynthesis. In terms of biological role, cell wall formation. Catalyzes the addition of glutamate to the nucleotide precursor UDP-N-acetylmuramoyl-L-alanine (UMA). This is UDP-N-acetylmuramoylalanine--D-glutamate ligase from Thermotoga maritima (strain ATCC 43589 / DSM 3109 / JCM 10099 / NBRC 100826 / MSB8).